We begin with the raw amino-acid sequence, 348 residues long: D-fructose 1,6-bisphosphatase class 2/sedoheptulose 1,7-bisphosphatase 2 (348 aa).

Residues Asp33, Glu57, Asp97, and Glu100 each coordinate Mn(2+). Residues 100–102, Tyr131, 176–178, and 198–200 each bind substrate; these read EGT, RER, and DGD. Glu225 provides a ligand contact to Mn(2+).

It belongs to the FBPase class 2 family. As to quaternary structure, homotetramer.

The enzyme catalyses beta-D-fructose 1,6-bisphosphate + H2O = beta-D-fructose 6-phosphate + phosphate. The catalysed reaction is D-sedoheptulose 1,7-bisphosphate + H2O = D-sedoheptulose 7-phosphate + phosphate. The protein operates within carbohydrate biosynthesis; Calvin cycle. Its function is as follows. Catalyzes the hydrolysis of fructose 1,6-bisphosphate (Fru 1,6-P2) and sedoheptulose 1,7-bisphosphate (Sed 1,7-P2) to fructose 6-phosphate and sedoheptulose 7-phosphate, respectively. This is D-fructose 1,6-bisphosphatase class 2/sedoheptulose 1,7-bisphosphatase 2 from Acaryochloris marina (strain MBIC 11017).